We begin with the raw amino-acid sequence, 165 residues long: Small ribosomal subunit protein uS13 (165 aa).

The interval 139 to 165 (GMTIGVARKKAAQPQSQQSSSQQQKSS) is disordered. Residues 153–165 (QSQQSSSQQQKSS) show a composition bias toward low complexity.

Belongs to the universal ribosomal protein uS13 family. In terms of assembly, part of the 30S ribosomal subunit. Forms a loose heterodimer with protein S19. Forms two bridges to the 50S subunit in the 70S ribosome.

In terms of biological role, located at the top of the head of the 30S subunit, it contacts several helices of the 16S rRNA. In the 70S ribosome it contacts the 23S rRNA (bridge B1a) and protein L5 of the 50S subunit (bridge B1b), connecting the 2 subunits; these bridges are implicated in subunit movement. The protein is Small ribosomal subunit protein uS13 of Saccharolobus solfataricus (strain ATCC 35092 / DSM 1617 / JCM 11322 / P2) (Sulfolobus solfataricus).